The chain runs to 70 residues: Large ribosomal subunit protein bL31 (70 aa).

Positions 16, 18, 37, and 40 each coordinate Zn(2+).

It belongs to the bacterial ribosomal protein bL31 family. Type A subfamily. As to quaternary structure, part of the 50S ribosomal subunit. Zn(2+) is required as a cofactor.

Binds the 23S rRNA. The chain is Large ribosomal subunit protein bL31 from Haemophilus ducreyi (strain 35000HP / ATCC 700724).